The primary structure comprises 141 residues: Ly6/PLAUR domain-containing protein 1 (141 aa).

A signal peptide spans 1–20; the sequence is MWVLGIAATFCGLFWLPGLA. Intrachain disulfides connect Cys25-Cys54, Cys28-Cys37, Cys46-Cys71, Cys77-Cys100, Cys88-Cys97, and Cys101-Cys106. Residues 25-107 form the UPAR/Ly6 domain; the sequence is CYQCEEFQLN…ISCCNTPLCN (83 aa). Residue Asn45 is glycosylated (N-linked (GlcNAc...) asparagine). Gly115 carries GPI-anchor amidated glycine lipidation. The propeptide at 116–141 is removed in mature form; the sequence is SSASAIRPGLLTTLLFFHLALCLAHC.

Interacts with CHRNA4 and nAChRs containing alpha-4:beta-2 (CHRNA4:CHRNB2) and alpha-7 (CHRNA7) subunits. Preferentially expressed in the nervous system. Expressed in embryonic and postnatal postmitotic central and peripheral neurons including subpopulations of motor neurons, sensory neurons, interneurons and neurons of the autonomous nervous system. Expressed around the growing nerves in the limb bud. Expressed at high levels in specific brain regions such as the prefrontal cortex, amygdala, hippocampus, mediodorsal thalamus, dentate gyrus and specific brainstem nuclei (at protein level).

Its subcellular location is the cell membrane. Believed to act as a modulator of nicotinic acetylcholine receptors (nAChRs) activity. In vitro increases receptor desensitization and decreases affinity for ACh of alpha-4:beta-2-containing nAChRs. May play a role in the intracellular trafficking of alpha-4:beta-2 and alpha-7-containing nAChRs and may inhibit their expression at the cell surface. May be involved in the control of anxiety. The polypeptide is Ly6/PLAUR domain-containing protein 1 (Lypd1) (Mus musculus (Mouse)).